The chain runs to 125 residues: MYNINRPISPHLTIYNTQKSSLFSIWHRISGVAMFTLIASPPLFLKLATFSYKSFNILDLMLNNSSLILPWFIVIISVIFLYHIINGIRHFLWDSVVNVNTESIIKDSNTLLALVFLIMLFKFIL.

3 helical membrane passes run 29–49, 68–88, and 104–124; these read ISGV…KLAT, ILPW…INGI, and IIKD…FKFI. Heme is bound at residue His83.

Belongs to the cytochrome b560 family. As to quaternary structure, forms part of complex II containing four subunits: a 70 kDa flavoprotein (FP), a 27 kDa iron-sulfur protein (IP), a cytochrome B and a membrane-anchoring protein. Heme is required as a cofactor.

The protein localises to the mitochondrion inner membrane. It functions in the pathway carbohydrate metabolism; tricarboxylic acid cycle. In terms of biological role, membrane-anchoring subunit of succinate dehydrogenase (SDH) that is involved in complex II of the mitochondrial electron transport chain and is responsible for transferring electrons from succinate to ubiquinone (coenzyme Q). The protein is Succinate dehydrogenase cytochrome b560 subunit (SDH3) of Porphyra purpurea (Red seaweed).